A 734-amino-acid chain; its full sequence is Photosystem I P700 chlorophyll a apoprotein A2 (734 aa).

Helical transmembrane passes span 46–69, 135–158, 175–199, 273–291, 330–353, 369–395, 417–439, and 517–535; these read IFAS…FHVA, LYTG…LHLQ, LNHH…HVAI, IAHH…GHMY, LHFQ…QHMY, AALY…IFFI, AIIS…LYVH, and FLVH…LILV. The [4Fe-4S] cluster site is built by C559 and C568. Transmembrane regions (helical) follow at residues 575 to 596 and 643 to 665; these read AFYL…YWHW and LSVW…MFLI. Positions 654, 662, and 670 each coordinate chlorophyll a. W671 serves as a coordination point for phylloquinone. The helical transmembrane segment at 707–727 threads the bilayer; that stretch reads LVGLAHFSVGYIFTYAAFLIA.

It belongs to the PsaA/PsaB family. In terms of assembly, the PsaA/B heterodimer binds the P700 chlorophyll special pair and subsequent electron acceptors. PSI consists of a core antenna complex that captures photons, and an electron transfer chain that converts photonic excitation into a charge separation. The eukaryotic PSI reaction center is composed of at least 11 subunits. P700 is a chlorophyll a/chlorophyll a' dimer, A0 is one or more chlorophyll a, A1 is one or both phylloquinones and FX is a shared 4Fe-4S iron-sulfur center. is required as a cofactor.

The protein localises to the plastid. It localises to the chloroplast thylakoid membrane. It catalyses the reaction reduced [plastocyanin] + hnu + oxidized [2Fe-2S]-[ferredoxin] = oxidized [plastocyanin] + reduced [2Fe-2S]-[ferredoxin]. PsaA and PsaB bind P700, the primary electron donor of photosystem I (PSI), as well as the electron acceptors A0, A1 and FX. PSI is a plastocyanin-ferredoxin oxidoreductase, converting photonic excitation into a charge separation, which transfers an electron from the donor P700 chlorophyll pair to the spectroscopically characterized acceptors A0, A1, FX, FA and FB in turn. Oxidized P700 is reduced on the lumenal side of the thylakoid membrane by plastocyanin. The sequence is that of Photosystem I P700 chlorophyll a apoprotein A2 from Piper cenocladum (Ant piper).